The sequence spans 316 residues: 1-phosphofructokinase (316 aa).

ATP contacts are provided by residues 225-230 (SMGAGG) and 256-257 (GD). The active-site Proton acceptor is the Asp257.

Belongs to the carbohydrate kinase PfkB family.

It carries out the reaction beta-D-fructose 1-phosphate + ATP = beta-D-fructose 1,6-bisphosphate + ADP + H(+). Its function is as follows. Catalyzes the ATP-dependent phosphorylation of fructose-l-phosphate to fructose-l,6-bisphosphate. This chain is 1-phosphofructokinase, found in Rhodobacter capsulatus (Rhodopseudomonas capsulata).